The sequence spans 389 residues: Oxytocin receptor (389 aa).

Over 1-38 (MEGALAANWSAEAANASAAPPGAEGNRTAGPPRRNEAL) the chain is Extracellular. A compositionally biased stretch (low complexity) spans 7–26 (ANWSAEAANASAAPPGAEGN). The interval 7–31 (ANWSAEAANASAAPPGAEGNRTAGP) is disordered. Residues Asn-8, Asn-15, and Asn-26 are each glycosylated (N-linked (GlcNAc...) asparagine). A helical transmembrane segment spans residues 39-63 (ARVEVAVLCLILLLALSGNACVLLA). Over 64 to 74 (LRTTRQKHSRL) the chain is Cytoplasmic. The chain crosses the membrane as a helical span at residues 75–97 (FFFMKHLSIADLVVAVFQVLPQL). The Extracellular segment spans residues 98 to 113 (LWDITFRFYGPDLLCR). Cys-112 and Cys-187 are joined by a disulfide. Residues 114–135 (LVKYLQVVGMFASTYLLLLMSL) form a helical membrane-spanning segment. Residues 136 to 154 (DRCLAICQPLRSLRRRTDR) lie on the Cytoplasmic side of the membrane. A helical transmembrane segment spans residues 155–175 (LAVLATWLGCLVASAPQVHIF). At 176-202 (SLREVADGVFDCWAVFIQPWGPKAYIT) the chain is on the extracellular side. Residues 203-225 (WITLAVYIVPVIVLAACYGLISF) form a helical membrane-spanning segment. Residues 226–275 (KIWQNLRLKTAAAAAAEAPEGAAAGDGGRVALARVSSVKLISKAKIRTVK) lie on the Cytoplasmic side of the membrane. Residues 276-294 (MTFIIVLAFIVCWTPFFFV) traverse the membrane as a helical segment. Topologically, residues 295-309 (QMWSVWDANAPKEAS) are extracellular. The chain crosses the membrane as a helical span at residues 310 to 332 (AFIIVMLLASLNSCCNPWIYMLF). Residues 333–389 (TGHLFHELVQRFLCCSASYLKGRRLGETSASKKSNSSSFVLSHRSSSQRSCSQPSTA) are Cytoplasmic-facing. The segment at 361–389 (SASKKSNSSSFVLSHRSSSQRSCSQPSTA) is disordered. Residues Ser-366 and Ser-368 each carry the phosphoserine modification.

It belongs to the G-protein coupled receptor 1 family. Vasopressin/oxytocin receptor subfamily.

It is found in the cell membrane. Functionally, receptor for oxytocin. The activity of this receptor is mediated by G proteins which activate a phosphatidylinositol-calcium second messenger system. This chain is Oxytocin receptor (OXTR), found in Homo sapiens (Human).